The chain runs to 497 residues: Probable D-lactate dehydrogenase, mitochondrial (497 aa).

An FAD-binding PCMH-type domain is found at 65–246; the sequence is HRCRPPDVVV…TKATLRLYGV (182 aa).

This sequence belongs to the FAD-binding oxidoreductase/transferase type 4 family. Requires FAD as cofactor.

The protein localises to the mitochondrion. It catalyses the reaction (R)-lactate + 2 Fe(III)-[cytochrome c] = 2 Fe(II)-[cytochrome c] + pyruvate + 2 H(+). In terms of biological role, involved in D-lactate, but not L-lactate catabolic process. This Danio rerio (Zebrafish) protein is Probable D-lactate dehydrogenase, mitochondrial (ldhd).